Reading from the N-terminus, the 258-residue chain is 6-carboxyhexanoate--CoA ligase (258 aa).

This sequence belongs to the BioW family. In terms of assembly, homodimer. Mg(2+) is required as a cofactor.

It catalyses the reaction heptanedioate + ATP + CoA = 6-carboxyhexanoyl-CoA + AMP + diphosphate. It participates in metabolic intermediate metabolism; pimeloyl-CoA biosynthesis; pimeloyl-CoA from pimelate: step 1/1. In terms of biological role, catalyzes the transformation of pimelate into pimeloyl-CoA with concomitant hydrolysis of ATP to AMP. The polypeptide is 6-carboxyhexanoate--CoA ligase (Bacillus spizizenii (strain ATCC 23059 / NRRL B-14472 / W23) (Bacillus subtilis subsp. spizizenii)).